The primary structure comprises 61 residues: Small ribosomal subunit protein uS14B (61 aa).

The Zn(2+) site is built by cysteine 24, cysteine 27, cysteine 40, and cysteine 43.

Belongs to the universal ribosomal protein uS14 family. Zinc-binding uS14 subfamily. In terms of assembly, part of the 30S ribosomal subunit. Contacts proteins S3 and S10. Zn(2+) serves as cofactor.

In terms of biological role, binds 16S rRNA, required for the assembly of 30S particles and may also be responsible for determining the conformation of the 16S rRNA at the A site. This Bacillus velezensis (strain DSM 23117 / BGSC 10A6 / LMG 26770 / FZB42) (Bacillus amyloliquefaciens subsp. plantarum) protein is Small ribosomal subunit protein uS14B.